Consider the following 342-residue polypeptide: Thioredoxin reductase 2, mitochondrial (342 aa).

A mitochondrion-targeting transit peptide spans 1–23 (MIKHIVSPFRTNFVGISKSVLSR). Residues 34–37 (SGPA), 56–68 (EGMMANGIAAGGQ), 63–64 (IA), Q68, N77, V110, C168, D311, 311–320 (DVQDSRYRQA), and 318–320 (RQA) contribute to the FAD site. A disulfide bond links C165 and C168.

Belongs to the class-II pyridine nucleotide-disulfide oxidoreductase family. Homodimer. The cofactor is FAD.

The protein localises to the mitochondrion. The enzyme catalyses [thioredoxin]-dithiol + NADP(+) = [thioredoxin]-disulfide + NADPH + H(+). Acts on mitochondrial thioredoxin 3. Implicated in the defense against oxidative stress. This is Thioredoxin reductase 2, mitochondrial from Saccharomyces cerevisiae (strain ATCC 204508 / S288c) (Baker's yeast).